The following is a 559-amino-acid chain: Intestinal-type alkaline phosphatase (559 aa).

The N-terminal stretch at 1 to 19 is a signal peptide; sequence MQGPWVLLLLGLRLQLSLS. Asp61 lines the Mg(2+) pocket. The Zn(2+) site is built by Asp61 and Ser111. Residue Ser111 is the Phosphoserine intermediate of the active site. Cys140 and Cys202 are joined by a disulfide. N-linked (GlcNAc...) asparagine glycosylation occurs at Asn141. Ser174 is a Mg(2+) binding site. Glu235 contributes to the Ca(2+) binding site. Residue Asn241 is glycosylated (N-linked (GlcNAc...) asparagine). Residues Phe288, Glu289, and Asp304 each contribute to the Ca(2+) site. Glu330 contacts Mg(2+). Asp335, His339, Asp376, and His377 together coordinate Zn(2+). Residue Asn426 is glycosylated (N-linked (GlcNAc...) asparagine). His450 contributes to the Zn(2+) binding site. A disulfide bond links Cys485 and Cys492. A disordered region spans residues 496–531; the sequence is PPADESQTTTTTRQTTITTTTTTTTTTTTPVHNSAR. Residues 503–524 show a composition bias toward low complexity; sequence TTTTTRQTTITTTTTTTTTTTT. Asn528 carries the GPI-anchor amidated asparagine lipid modification. A propeptide spans 529-559 (removed in mature form); sequence SARSLGPATAPLALALLAGMLMLLLGAPAES.

The protein belongs to the alkaline phosphatase family. Homodimer. Mg(2+) is required as a cofactor. Requires Zn(2+) as cofactor. It depends on Ca(2+) as a cofactor. As to expression, intestine and thymus.

It localises to the cell membrane. It carries out the reaction a phosphate monoester + H2O = an alcohol + phosphate. Functionally, alkaline phosphatase that can hydrolyze various phosphate compounds. The sequence is that of Intestinal-type alkaline phosphatase (Iap) from Mus musculus (Mouse).